The primary structure comprises 127 residues: Large ribosomal subunit protein bL19 (127 aa).

Belongs to the bacterial ribosomal protein bL19 family.

This protein is located at the 30S-50S ribosomal subunit interface and may play a role in the structure and function of the aminoacyl-tRNA binding site. The polypeptide is Large ribosomal subunit protein bL19 (Jannaschia sp. (strain CCS1)).